The primary structure comprises 465 residues: A-type ATP synthase subunit B (465 aa).

The protein belongs to the ATPase alpha/beta chains family. In terms of assembly, has multiple subunits with at least A(3), B(3), C, D, E, F, H, I and proteolipid K(x).

Its subcellular location is the cell membrane. Functionally, component of the A-type ATP synthase that produces ATP from ADP in the presence of a proton gradient across the membrane. The B chain is a regulatory subunit. The protein is A-type ATP synthase subunit B of Sulfurisphaera tokodaii (strain DSM 16993 / JCM 10545 / NBRC 100140 / 7) (Sulfolobus tokodaii).